The chain runs to 720 residues: Secreted RxLR effector protein 138 (720 aa).

A signal peptide spans 1-20 (MRSAFYVAIVLLVAAGSQTA). The RxLR-dEER motif lies at 56–71 (RNLKDDFMFSAGDEER). A disordered region spans residues 264–335 (ESNTRKRNNV…VAPPEPSRLD (72 aa)). Residues 320-335 (KQHDHRVAPPEPSRLD) show a composition bias toward basic and acidic residues. N-linked (GlcNAc...) asparagine glycosylation occurs at Asn609.

This sequence belongs to the RxLR effector family.

The protein resides in the secreted. It localises to the host nucleus. Secreted effector that acts as an elicitor that induces cell death in host plant cells. This is Secreted RxLR effector protein 138 from Plasmopara viticola (Downy mildew of grapevine).